The sequence spans 293 residues: uncharacterized protein (293 aa).

2 disordered regions span residues 1-23 (MGWPPAQKPEDSKEEHGGPAQTD) and 52-83 (ELQSYSHTSESPVETKTPTTSSEEQDEQSELS). Positions 8–17 (KPEDSKEEHG) are enriched in basic and acidic residues. Polar residues predominate over residues 52–71 (ELQSYSHTSESPVETKTPTT).

This is an uncharacterized protein from Mus musculus (Mouse).